The chain runs to 534 residues: Probable alpha-galactosidase A (534 aa).

The N-terminal stretch at methionine 1–serine 25 is a signal peptide. Cysteine 47 and cysteine 79 are oxidised to a cystine. 4 N-linked (GlcNAc...) asparagine glycosylation sites follow: asparagine 50, asparagine 88, asparagine 94, and asparagine 124. A disulfide bridge links cysteine 127 with cysteine 157. The active-site Nucleophile is the aspartate 155. Asparagine 204 carries an N-linked (GlcNAc...) asparagine glycan. Catalysis depends on aspartate 213, which acts as the Proton donor. The Ricin B-type lectin domain occupies cysteine 413–leucine 534. A disulfide bond links cysteine 430 and cysteine 443. Asparagine 444 is a glycosylation site (N-linked (GlcNAc...) asparagine). Cysteines 468 and 481 form a disulfide.

It belongs to the glycosyl hydrolase 27 family.

The protein localises to the secreted. It carries out the reaction Hydrolysis of terminal, non-reducing alpha-D-galactose residues in alpha-D-galactosides, including galactose oligosaccharides, galactomannans and galactolipids.. Its function is as follows. Hydrolyzes a variety of simple alpha-D-galactoside as well as more complex molecules such as oligosaccharides and polysaccharides. The protein is Probable alpha-galactosidase A (aglA) of Aspergillus oryzae (strain ATCC 42149 / RIB 40) (Yellow koji mold).